The chain runs to 1129 residues: Eukaryotic translation initiation factor 3 subunit A (1129 aa).

The PCI domain occupies 319–502 (LQRMAAHVLL…NSIYFGTDLT (184 aa)). Disordered stretches follow at residues 590 to 633 (NNAR…NEIQ) and 836 to 1129 (AAEA…VKRR). Composition is skewed to basic and acidic residues over residues 836–903 (AAEA…RSER), 923–964 (DRND…KDTD), 971–985 (WRVRREPVEPQRERG), 994–1044 (GRDD…DQPQ), and 1053–1076 (DSPRQNDRDNRDNRRPAGDRRDIR). A compositionally biased stretch (gly residues) spans 1080–1091 (PKEGGGGGGGGN). A compositionally biased stretch (basic and acidic residues) spans 1098-1119 (PRDEKPPVKRDQPQDKENKAGD).

It belongs to the eIF-3 subunit A family. Component of the eukaryotic translation initiation factor 3 (eIF-3) complex. The eIF-3 complex interacts with pix.

It is found in the cytoplasm. Its function is as follows. RNA-binding component of the eukaryotic translation initiation factor 3 (eIF-3) complex, which is involved in protein synthesis of a specialized repertoire of mRNAs and, together with other initiation factors, stimulates binding of mRNA and methionyl-tRNAi to the 40S ribosome. The eIF-3 complex specifically targets and initiates translation of a subset of mRNAs involved in cell proliferation. This is Eukaryotic translation initiation factor 3 subunit A from Drosophila mojavensis (Fruit fly).